The primary structure comprises 306 residues: Glutaminase (306 aa).

Residues serine 66, asparagine 116, glutamate 159, asparagine 166, tyrosine 190, tyrosine 242, and valine 260 each contribute to the substrate site.

It belongs to the glutaminase family. As to quaternary structure, homotetramer.

The catalysed reaction is L-glutamine + H2O = L-glutamate + NH4(+). This chain is Glutaminase, found in Caulobacter vibrioides (strain ATCC 19089 / CIP 103742 / CB 15) (Caulobacter crescentus).